Reading from the N-terminus, the 124-residue chain is Small ribosomal subunit protein uS13c (124 aa).

A disordered region spans residues 100 to 124 (GQRTRTNARTRKGKVKTAVAKKKGR). Basic residues predominate over residues 101–124 (QRTRTNARTRKGKVKTAVAKKKGR).

The protein belongs to the universal ribosomal protein uS13 family. In terms of assembly, part of the 30S ribosomal subunit.

It localises to the plastid. The protein resides in the chloroplast. In terms of biological role, located at the top of the head of the 30S subunit, it contacts several helices of the 16S rRNA. The protein is Small ribosomal subunit protein uS13c of Emiliania huxleyi (Coccolithophore).